The chain runs to 352 residues: MDEMSNVAKTTTETSGLTDSVLSLTKRMKPTEVTTTTKPALSNTTKFKGVVQQQNGHWGAQIYADHRRIWLGTFKSAHEAAAAYDSASIKLRSFDANSHRNFPWSDFTLHEPDFQECYTTEAVLNMIRDGSYQHKFRDFLRIRSQIVANINIVGSKQVLGGGEGGQESNKCFSCTQLFQKELTPSDVGKLNRLVIPKKYAVKYMPFISDDQSEKETSEGVEDVEVVFYDRAMRQWKFRYCYWRSSQSFVFTRGWNGFVKEKNLKEKDIIVFYTCDVPNNVKTLEGQSKTFLMIDVHHFSGNGFVVPEEVNKTVHEISDEEMKTETLFTSKVEEETKSEEKKGGFMLFGVRIQ.

Residues 1–20 (MDEMSNVAKTTTETSGLTDS) are disordered. Residues 7–20 (VAKTTTETSGLTDS) are compositionally biased toward polar residues. The segment at residues 46–103 (KFKGVVQQQNGHWGAQIYADHRRIWLGTFKSAHEAAAAYDSASIKLRSFDANSHRNFP) is a DNA-binding region (AP2/ERF). The segment at residues 178 to 297 (FQKELTPSDV…KTFLMIDVHH (120 aa)) is a DNA-binding region (TF-B3).

Belongs to the AP2/ERF transcription factor family. RAV subfamily.

The protein resides in the nucleus. In terms of biological role, probably acts as a transcriptional activator. Binds to the GCC-box pathogenesis-related promoter element. May be involved in the regulation of gene expression by stress factors and by components of stress signal transduction pathways. The protein is AP2/ERF and B3 domain-containing transcription factor At1g51120 of Arabidopsis thaliana (Mouse-ear cress).